The following is a 1009-amino-acid chain: C2 domain-containing protein aex-1 (1009 aa).

A C2 domain is found at 812–945; sequence NAPHVDVHIS…ASEEKPTQRL (134 aa).

Belongs to the unc-13 family. As to expression, expressed in intestine, body wall muscles and some amphid neurons.

In terms of biological role, involved in retrograde signaling from post-synaptic cells to pre-synaptic neurons, probably by regulating vesicle exocytosis in post-synaptic cells. Acts in muscles, to regulate the localization of synaptic vesicle fusion protein unc-13 likely during vesicle exocytosis and thus regulate retrograde signaling at the neuromuscular junction (NMJ). Regulates anterior body muscle contractions (aBOC) and the expulsion steps during the defecation motor program (DMP). Probably by regulating DMP, plays a homeostatic role in the uptake of triglycerides. Regulates locomotion. This Caenorhabditis elegans protein is C2 domain-containing protein aex-1.